The sequence spans 802 residues: Copper-exporting P-type ATPase (802 aa).

2 HMA domains span residues 5-70 (KKTT…YGVA) and 72-138 (ETVE…YDAS). Cu(+) is bound by residues Cys-16, Cys-19, Cys-83, and Cys-86. Helical transmembrane passes span 161–181 (LIIS…HLFN), 192–212 (WFQF…FYVG), 224–244 (MDVL…YEMV), 256–276 (LYFE…YLEA), 411–431 (YFVP…ITLV), and 438–458 (PALV…LGLA). Asp-495 functions as the 4-aspartylphosphate intermediate in the catalytic mechanism. The Mg(2+) site is built by Asp-690 and Asp-694. 2 consecutive transmembrane segments (helical) span residues 748-767 (LFWA…LGLL) and 771-790 (VAGA…ALRL).

It belongs to the cation transport ATPase (P-type) (TC 3.A.3) family. Type IB subfamily.

It localises to the cell membrane. The enzyme catalyses Cu(+)(in) + ATP + H2O = Cu(+)(out) + ADP + phosphate + H(+). Involved in copper export. The chain is Copper-exporting P-type ATPase (copA) from Staphylococcus aureus (strain MRSA252).